A 273-amino-acid chain; its full sequence is 2,3,4,5-tetrahydropyridine-2,6-dicarboxylate N-succinyltransferase (273 aa).

Arg-104 and Asp-141 together coordinate substrate.

It belongs to the transferase hexapeptide repeat family. As to quaternary structure, homotrimer.

The protein localises to the cytoplasm. It catalyses the reaction (S)-2,3,4,5-tetrahydrodipicolinate + succinyl-CoA + H2O = (S)-2-succinylamino-6-oxoheptanedioate + CoA. Its pathway is amino-acid biosynthesis; L-lysine biosynthesis via DAP pathway; LL-2,6-diaminopimelate from (S)-tetrahydrodipicolinate (succinylase route): step 1/3. The chain is 2,3,4,5-tetrahydropyridine-2,6-dicarboxylate N-succinyltransferase from Acinetobacter baylyi (strain ATCC 33305 / BD413 / ADP1).